A 340-amino-acid chain; its full sequence is MTVQMEYEKDVKVAALDGKKIAVIGYGSQGHAHAQNLRDSGRDVIIGVRPGKSFDKAKEDGFDTYTVAEATKLADVIMILAPDEIQQELYEAEIAPNLEAGNAVGFAHGFNIHFEFIKVPADVDVFMCAPKGPGHLVRRTYEEGFGVPALYAVYQDATGNAKNIAMDWCKGVGAARVGLLETTYKEETEEDLFGEQAVLCGGLTALIEAGFEVLTEAGYAPELAYFEVLHEMKLIVDLIYEGGFKKMRQSISNTAEYGDYVSGPRVITEQVKENMKAVLADIQNGKFANDFVNDYKAGRPKLTAYREQAANLEIEKVGAELRKAMPFVGKNDDDAFKIYN.

The KARI N-terminal Rossmann domain occupies V3–T182. Residues Y26–Q29, R49, S53, and D83–Q86 contribute to the NADP(+) site. Residue H108 is part of the active site. G134 contributes to the NADP(+) binding site. A KARI C-terminal knotted domain is found at T183 to V328. D191, E195, E227, and E231 together coordinate Mg(2+). S252 is a substrate binding site.

This sequence belongs to the ketol-acid reductoisomerase family. The cofactor is Mg(2+).

It catalyses the reaction (2R)-2,3-dihydroxy-3-methylbutanoate + NADP(+) = (2S)-2-acetolactate + NADPH + H(+). The enzyme catalyses (2R,3R)-2,3-dihydroxy-3-methylpentanoate + NADP(+) = (S)-2-ethyl-2-hydroxy-3-oxobutanoate + NADPH + H(+). Its pathway is amino-acid biosynthesis; L-isoleucine biosynthesis; L-isoleucine from 2-oxobutanoate: step 2/4. It participates in amino-acid biosynthesis; L-valine biosynthesis; L-valine from pyruvate: step 2/4. Functionally, involved in the biosynthesis of branched-chain amino acids (BCAA). Catalyzes an alkyl-migration followed by a ketol-acid reduction of (S)-2-acetolactate (S2AL) to yield (R)-2,3-dihydroxy-isovalerate. In the isomerase reaction, S2AL is rearranged via a Mg-dependent methyl migration to produce 3-hydroxy-3-methyl-2-ketobutyrate (HMKB). In the reductase reaction, this 2-ketoacid undergoes a metal-dependent reduction by NADPH to yield (R)-2,3-dihydroxy-isovalerate. The chain is Ketol-acid reductoisomerase (NADP(+)) from Streptococcus pneumoniae (strain JJA).